Reading from the N-terminus, the 215-residue chain is Chymomexicain (215 aa).

3 disulfides stabilise this stretch: Cys22-Cys63, Cys56-Cys96, and Cys154-Cys201. Cys25 is a catalytic residue. Active-site residues include His160 and Asn176.

Belongs to the peptidase C1 family.

In terms of biological role, cysteine protease. This chain is Chymomexicain, found in Jacaratia mexicana (Wild papaya).